The following is a 334-amino-acid chain: Anthranilate phosphoribosyltransferase (334 aa).

Residues Gly-79, 82 to 83 (GD), Ser-87, 89 to 92 (NIST), 107 to 115 (KHGNRSISS), and Ser-119 each bind 5-phospho-alpha-D-ribose 1-diphosphate. Residue Gly-79 participates in anthranilate binding. Ser-91 is a Mg(2+) binding site. Asn-110 is an anthranilate binding site. Residue Arg-165 participates in anthranilate binding. The Mg(2+) site is built by Asp-224 and Glu-225.

The protein belongs to the anthranilate phosphoribosyltransferase family. Homodimer. Mg(2+) is required as a cofactor.

It catalyses the reaction N-(5-phospho-beta-D-ribosyl)anthranilate + diphosphate = 5-phospho-alpha-D-ribose 1-diphosphate + anthranilate. It functions in the pathway amino-acid biosynthesis; L-tryptophan biosynthesis; L-tryptophan from chorismate: step 2/5. Its function is as follows. Catalyzes the transfer of the phosphoribosyl group of 5-phosphorylribose-1-pyrophosphate (PRPP) to anthranilate to yield N-(5'-phosphoribosyl)-anthranilate (PRA). The protein is Anthranilate phosphoribosyltransferase of Streptococcus pneumoniae serotype 19F (strain G54).